A 262-amino-acid chain; its full sequence is Putative cysteine-rich repeat secretory protein 24 (262 aa).

The signal sequence occupies residues 1-29 (MSLSSSVTKHLISASILAIVAMQLPSVHS). 2 consecutive Gnk2-homologous domains span residues 39 to 141 (YLHH…SIYT) and 147 to 259 (YKNN…LYPF).

It belongs to the cysteine-rich repeat secretory protein family.

It is found in the secreted. This Arabidopsis thaliana (Mouse-ear cress) protein is Putative cysteine-rich repeat secretory protein 24 (CRRSP24).